We begin with the raw amino-acid sequence, 223 residues long: MRLVIARCSVDYAGRLTAHLPSAPRLILVKADGSVSIHADDRAYKPLNWMSPPCALKEGTGEEEGVWTVVNKAGEKLIITMEEILHDSSHELGVDPGLIKDGVEAHLQELLADRIDTLGEGYTLIRREYMTAIGPVDILCRDAQGGTVAVEIKRRGEIDGVEQLTRYLELLNRDPHLAPVRGVFAAQEIKPQARVLATDRGIGCQVLDYDALRGIEDDKLRLF.

Belongs to the NucS endonuclease family.

It is found in the cytoplasm. Its function is as follows. Cleaves both 3' and 5' ssDNA extremities of branched DNA structures. This Streptomyces coelicolor (strain ATCC BAA-471 / A3(2) / M145) protein is Endonuclease NucS.